A 374-amino-acid polypeptide reads, in one-letter code: Tuliposide A-converting enzyme b3, amyloplastic (374 aa).

The transit peptide at 1 to 68 (MSAALFCGPP…TNSSLSPSPT (68 aa)) directs the protein to the amyloplast. Residue serine 226 is the Acyl-ester intermediate of the active site. Catalysis depends on charge relay system residues aspartate 316 and histidine 348.

Belongs to the AB hydrolase superfamily. Homodimer. As to expression, highly expressed in pistil and bulb scales. Lower expression in stem, and barely detected in root, leaf, petal and stamen.

It localises to the plastid. Its subcellular location is the amyloplast. The enzyme catalyses 6-tuliposide A = tulipalin A + D-glucose. Lactone-forming carboxylesterases, specifically catalyzing intramolecular transesterification, but not hydrolysis. Involved in the biosynthesis of tulipalins, defensive chemicals that show antimicrobial activities against a broad range of strains of bacteria and fungi. Substrates are 6-tuliposide A &gt; 6-tuliposide B. The protein is Tuliposide A-converting enzyme b3, amyloplastic (TCEA-B3) of Tulipa gesneriana (Garden tulip).